The primary structure comprises 135 residues: RxLR effector protein PITG_02860 (135 aa).

Positions 1 to 18 (MRLAFLLLAVSHFICGNA) are cleaved as a signal peptide. The RxLR-dEER motif lies at 48 to 64 (RKLLRTDERLSEANEER). Residues 126 to 135 (LKDPQAFRGP) form an NRL1-binding domain region.

Belongs to the RxLR effector family. As to quaternary structure, interacts with host ubiquitin E3 ligase NRL1.

Its subcellular location is the secreted. It localises to the host cytoplasm. It is found in the host nucleus. The protein localises to the host nucleoplasm. Functionally, effector that promotes P.infestans virulence and suppresses pattern-triggered immunity (PTI). Interacts with the host ubiquitin E3 ligase NRL1 and enhances the association between NRL1 and SWAP70 to promote proteasome-mediated degradation of SWAP70, which results in the suppression of immunity. The protein is RxLR effector protein PITG_02860 of Phytophthora infestans (strain T30-4) (Potato late blight agent).